Consider the following 139-residue polypeptide: Small integral membrane protein 34 (139 aa).

The chain crosses the membrane as a helical span at residues 46–66; that stretch reads GTSAAWYILTIIGIYAVIFVF.

It is found in the membrane. This is Small integral membrane protein 34 from Homo sapiens (Human).